A 184-amino-acid polypeptide reads, in one-letter code: Large ribosomal subunit protein uL22B (184 aa).

Lysine 46 is covalently cross-linked (Glycyl lysine isopeptide (Lys-Gly) (interchain with G-Cter in ubiquitin)). Threonine 70 is subject to Phosphothreonine.

This sequence belongs to the universal ribosomal protein uL22 family. In terms of assembly, component of the large ribosomal subunit (LSU). Mature yeast ribosomes consist of a small (40S) and a large (60S) subunit. The 40S small subunit contains 1 molecule of ribosomal RNA (18S rRNA) and 33 different proteins (encoded by 57 genes). The large 60S subunit contains 3 rRNA molecules (25S, 5.8S and 5S rRNA) and 46 different proteins (encoded by 81 genes). uL22 is associated with the polypeptide exit tunnel.

The protein resides in the cytoplasm. Its function is as follows. Component of the ribosome, a large ribonucleoprotein complex responsible for the synthesis of proteins in the cell. The small ribosomal subunit (SSU) binds messenger RNAs (mRNAs) and translates the encoded message by selecting cognate aminoacyl-transfer RNA (tRNA) molecules. The large subunit (LSU) contains the ribosomal catalytic site termed the peptidyl transferase center (PTC), which catalyzes the formation of peptide bonds, thereby polymerizing the amino acids delivered by tRNAs into a polypeptide chain. The nascent polypeptides leave the ribosome through a tunnel in the LSU and interact with protein factors that function in enzymatic processing, targeting, and the membrane insertion of nascent chains at the exit of the ribosomal tunnel. This is Large ribosomal subunit protein uL22B from Saccharomyces cerevisiae (strain ATCC 204508 / S288c) (Baker's yeast).